Consider the following 60-residue polypeptide: MAQIKITLTKSPIGRKPEQRKTVVALGLGKLNSSVVKEDNPAILGMVNAISHLVTVEEVK.

This sequence belongs to the universal ribosomal protein uL30 family. In terms of assembly, part of the 50S ribosomal subunit.

The chain is Large ribosomal subunit protein uL30 from Streptococcus suis (strain 98HAH33).